Consider the following 419-residue polypeptide: Transcriptional regulator Myc-A (419 aa).

Thr-69 is a glycosylation site (O-linked (GlcNAc) threonine). Positions 87 to 95 (EMVSEFLGD) match the 9aaTAD motif. Disordered stretches follow at residues 199-269 (QPML…PSPL) and 305-343 (NNHS…HNVL). The span at 217-245 (DSEDEEEEDEEEEEEEEEEEEEEEEEEID) shows a compositional bias: acidic residues. The span at 248–262 (TVEKRQKRHETDASE) shows a compositional bias: basic and acidic residues. A compositionally biased stretch (low complexity) spans 305-315 (NNHSINSSSSN). Residues 335–387 (DKRRTHNVLERQRRNELKLSFFALRDEIPEVANNEKAAKVVILKKATECIHSM) enclose the bHLH domain. The tract at residues 394–415 (LLSIKEQLRRKSEQLKHRLQQL) is leucine-zipper.

Efficient DNA binding requires dimerization with another bHLH protein. Binds DNA as a heterodimer with max. In terms of tissue distribution, high levels are seen in the kidney, gills and uterus.

The protein resides in the nucleus. In terms of biological role, transcription factor that binds DNA in a non-specific manner, yet also specifically recognizes the core sequence 5'-CAC[GA]TG-3'. Activates the transcription of growth-related genes. This is Transcriptional regulator Myc-A (myca) from Danio rerio (Zebrafish).